The chain runs to 211 residues: Protein-L-isoaspartate O-methyltransferase (211 aa).

Serine 62 is a catalytic residue.

Belongs to the methyltransferase superfamily. L-isoaspartyl/D-aspartyl protein methyltransferase family.

It is found in the cytoplasm. It carries out the reaction [protein]-L-isoaspartate + S-adenosyl-L-methionine = [protein]-L-isoaspartate alpha-methyl ester + S-adenosyl-L-homocysteine. In terms of biological role, catalyzes the methyl esterification of L-isoaspartyl residues in peptides and proteins that result from spontaneous decomposition of normal L-aspartyl and L-asparaginyl residues. It plays a role in the repair and/or degradation of damaged proteins. The protein is Protein-L-isoaspartate O-methyltransferase of Shewanella sp. (strain ANA-3).